The primary structure comprises 912 residues: Translation initiation factor IF-2 (912 aa).

The segment at 185 to 204 (NATRPKRKTKEEKQKEREER) is disordered. Residues 193-204 (TKEEKQKEREER) show a composition bias toward basic and acidic residues. The 171-residue stretch at 411-581 (LRPPIVTIMG…LLEAELLDLK (171 aa)) folds into the tr-type G domain. The tract at residues 420 to 427 (GHVDHGKT) is G1. 420 to 427 (GHVDHGKT) is a binding site for GTP. Positions 445–449 (GITQH) are G2. The tract at residues 467–470 (DTPG) is G3. GTP is bound by residues 467-471 (DTPGH) and 521-524 (NKID). The G4 stretch occupies residues 521 to 524 (NKID). Residues 557-559 (SAK) form a G5 region.

The protein belongs to the TRAFAC class translation factor GTPase superfamily. Classic translation factor GTPase family. IF-2 subfamily.

The protein resides in the cytoplasm. Functionally, one of the essential components for the initiation of protein synthesis. Protects formylmethionyl-tRNA from spontaneous hydrolysis and promotes its binding to the 30S ribosomal subunits. Also involved in the hydrolysis of GTP during the formation of the 70S ribosomal complex. The sequence is that of Translation initiation factor IF-2 from Azobacteroides pseudotrichonymphae genomovar. CFP2.